Here is a 348-residue protein sequence, read N- to C-terminus: 2-heptyl-4(1H)-quinolone synthase subunit PqsC (348 aa).

The Acyl-thioester intermediate role is filled by Cys-129. Residue His-269 is part of the active site.

Belongs to the thiolase-like superfamily. FabH family. As to quaternary structure, forms a tight complex with PqsB.

The protein resides in the cytoplasm. It carries out the reaction (2-aminobenzoyl)acetate + octanoyl-CoA + H(+) = 2-heptyl-4(1H)-quinolone + CO2 + CoA + H2O. Folding of PqsC and binding of octanoate are promoted by PqsB. Binding of the octanoyl group probably increases the binding affinity of the complex for 2-ABA. Activity of the complex is inhibited by 2-aminoacetophenone (2-AA). Functionally, required for the biosynthesis of the quorum-sensing signaling molecules 2-heptyl-4(1H)-quinolone (HHQ) and 2-heptyl-3-hydroxy-4(1H)-quinolone (Pseudomonas quinolone signal or PQS), which are important for biofilm formation and virulence. The PqsC/PqsB complex catalyzes the condensation of 2-aminobenzoylacetate (2-ABA) and octanoyl-CoA to form HHQ. First, PqsC acquires an octanoyl group from octanoyl-CoA and forms an octanoyl-PqsC intermediate. Then, together with PqsB, it catalyzes the coupling of 2-ABA with the octanoate group, leading to decarboxylation and dehydration, and resulting in closure of the quinoline ring. This is 2-heptyl-4(1H)-quinolone synthase subunit PqsC from Pseudomonas aeruginosa (strain ATCC 15692 / DSM 22644 / CIP 104116 / JCM 14847 / LMG 12228 / 1C / PRS 101 / PAO1).